The sequence spans 190 residues: Adenylate kinase (190 aa).

10-15 (AAGKGT) is an ATP binding site. An NMP region spans residues 30-59 (STGDMLRAAIASGSELGQRVSGIMERGELV). AMP contacts are provided by residues threonine 31, arginine 36, 57–59 (ELV), 85–88 (GFPR), and glutamine 92. Residues 126–136 (GRFAESGRADD) form an LID region. Arginine 127 is a binding site for ATP. 2 residues coordinate AMP: arginine 133 and arginine 144. Position 172 (glycine 172) interacts with ATP.

It belongs to the adenylate kinase family. As to quaternary structure, monomer.

It localises to the cytoplasm. The catalysed reaction is AMP + ATP = 2 ADP. The protein operates within purine metabolism; AMP biosynthesis via salvage pathway; AMP from ADP: step 1/1. In terms of biological role, catalyzes the reversible transfer of the terminal phosphate group between ATP and AMP. Plays an important role in cellular energy homeostasis and in adenine nucleotide metabolism. In Phenylobacterium zucineum (strain HLK1), this protein is Adenylate kinase.